A 454-amino-acid chain; its full sequence is Bifunctional protein GlmU (454 aa).

The segment at 1–228 is pyrophosphorylase; it reads MTLPLHVVIL…PQDVEGANDP (228 aa). UDP-N-acetyl-alpha-D-glucosamine contacts are provided by residues 10 to 13, lysine 24, glutamine 76, 81 to 82, 103 to 105, glycine 138, glutamate 153, asparagine 168, and asparagine 226; these read LAAG, GT, and YGD. Aspartate 105 contributes to the Mg(2+) binding site. Asparagine 226 lines the Mg(2+) pocket. A linker region spans residues 229 to 249; it reads WQLAQLERAWQLRAARALSLQ. Residues 250 to 454 are N-acetyltransferase; the sequence is GVRMADPARV…IEGWERPTKK (205 aa). UDP-N-acetyl-alpha-D-glucosamine-binding residues include arginine 332 and lysine 350. Catalysis depends on histidine 362, which acts as the Proton acceptor. The UDP-N-acetyl-alpha-D-glucosamine site is built by tyrosine 365 and asparagine 376. Residues alanine 379, 385-386, serine 404, alanine 422, and arginine 439 each bind acetyl-CoA; that span reads NY.

The protein in the N-terminal section; belongs to the N-acetylglucosamine-1-phosphate uridyltransferase family. In the C-terminal section; belongs to the transferase hexapeptide repeat family. In terms of assembly, homotrimer. Mg(2+) serves as cofactor.

The protein resides in the cytoplasm. The enzyme catalyses alpha-D-glucosamine 1-phosphate + acetyl-CoA = N-acetyl-alpha-D-glucosamine 1-phosphate + CoA + H(+). It catalyses the reaction N-acetyl-alpha-D-glucosamine 1-phosphate + UTP + H(+) = UDP-N-acetyl-alpha-D-glucosamine + diphosphate. Its pathway is nucleotide-sugar biosynthesis; UDP-N-acetyl-alpha-D-glucosamine biosynthesis; N-acetyl-alpha-D-glucosamine 1-phosphate from alpha-D-glucosamine 6-phosphate (route II): step 2/2. It functions in the pathway nucleotide-sugar biosynthesis; UDP-N-acetyl-alpha-D-glucosamine biosynthesis; UDP-N-acetyl-alpha-D-glucosamine from N-acetyl-alpha-D-glucosamine 1-phosphate: step 1/1. It participates in bacterial outer membrane biogenesis; LPS lipid A biosynthesis. In terms of biological role, catalyzes the last two sequential reactions in the de novo biosynthetic pathway for UDP-N-acetylglucosamine (UDP-GlcNAc). The C-terminal domain catalyzes the transfer of acetyl group from acetyl coenzyme A to glucosamine-1-phosphate (GlcN-1-P) to produce N-acetylglucosamine-1-phosphate (GlcNAc-1-P), which is converted into UDP-GlcNAc by the transfer of uridine 5-monophosphate (from uridine 5-triphosphate), a reaction catalyzed by the N-terminal domain. The protein is Bifunctional protein GlmU of Xanthomonas oryzae pv. oryzae (strain MAFF 311018).